Here is a 363-residue protein sequence, read N- to C-terminus: Ribosomal RNA large subunit methyltransferase M (363 aa).

S-adenosyl-L-methionine contacts are provided by residues Ser-187, 220 to 223 (CPGG), Asp-239, Asp-259, and Asp-276. The Proton acceptor role is filled by Lys-305.

The protein belongs to the class I-like SAM-binding methyltransferase superfamily. RNA methyltransferase RlmE family. RlmM subfamily. Monomer.

Its subcellular location is the cytoplasm. The enzyme catalyses cytidine(2498) in 23S rRNA + S-adenosyl-L-methionine = 2'-O-methylcytidine(2498) in 23S rRNA + S-adenosyl-L-homocysteine + H(+). In terms of biological role, catalyzes the 2'-O-methylation at nucleotide C2498 in 23S rRNA. This Shewanella loihica (strain ATCC BAA-1088 / PV-4) protein is Ribosomal RNA large subunit methyltransferase M.